A 1168-amino-acid polypeptide reads, in one-letter code: Myosin IC heavy chain (1168 aa).

The Myosin motor domain occupies 7–666 (HGVDDMVMLT…SVFSLEELRD (660 aa)). 101–108 (GESGAGKT) provides a ligand contact to ATP. Serine 311 is subject to Phosphoserine. The tract at residues 542–564 (INILVATLSKCTPHYIRCIKPNE) is actin-binding. The 189-residue stretch at 704–892 (KERRRLSLER…KVSVAPGLPP (189 aa)) folds into the TH1 domain. 3 disordered regions span residues 876–909 (DGKV…GGAS), 921–978 (ILGA…APGP), and 1036–1168 (AAAP…PPGM). Residues 895–909 (APNIQAPQETSGGAS) show a composition bias toward polar residues. Gly residues-rich tracts occupy residues 924 to 939 (AKGG…GGPS) and 950 to 959 (PGGGGGGPSP). Positions 960–978 (FGGRPSPSGPPAAASAPGP) are enriched in low complexity. The SH3 domain occupies 976 to 1035 (PGPEQARALYDFAAENPDELTFNEGAVVTVINKSNPDWWEGELNGQRGVFPASYVELIPR). Positions 1040-1052 (APGPSGGPRPAPP) are enriched in pro residues. Gly residues-rich tracts occupy residues 1063–1083 (GGPG…GRGG) and 1090–1099 (GRAGPPGGRG). A compositionally biased stretch (low complexity) spans 1100–1112 (MPAPGGAAPRGRG). Gly residues predominate over residues 1120–1141 (GPPGGGRGGAPPPGGMRGRGGP). The segment covering 1152 to 1161 (GGMMPPRGRA) has biased composition (low complexity).

Belongs to the TRAFAC class myosin-kinesin ATPase superfamily. Myosin family. In terms of assembly, myosin I heavy chain is single-headed. Dimer of a heavy and a light chain. Inability to self-assemble into filaments.

Its function is as follows. Myosin is a protein that binds to F-actin and has ATPase activity that is activated by F-actin. The polypeptide is Myosin IC heavy chain (MIC) (Acanthamoeba castellanii (Amoeba)).